Reading from the N-terminus, the 583-residue chain is 5-aminolevulinate synthase, erythroid-specific, mitochondrial (583 aa).

R158 is a succinyl-CoA binding site. Pyridoxal 5'-phosphate is bound by residues C253 and F254. The succinyl-CoA site is built by S275 and R294. Pyridoxal 5'-phosphate-binding residues include S327, H355, and T383. The active site involves K386. K386 carries the post-translational modification N6-(pyridoxal phosphate)lysine. T415 and T416 together coordinate pyridoxal 5'-phosphate. T503 is a succinyl-CoA binding site.

Belongs to the class-II pyridoxal-phosphate-dependent aminotransferase family. Homodimer. It depends on pyridoxal 5'-phosphate as a cofactor.

The protein resides in the mitochondrion inner membrane. The enzyme catalyses succinyl-CoA + glycine + H(+) = 5-aminolevulinate + CO2 + CoA. It participates in porphyrin-containing compound metabolism; protoporphyrin-IX biosynthesis; 5-aminolevulinate from glycine: step 1/1. Catalyzes the pyridoxal 5'-phosphate (PLP)-dependent condensation of succinyl-CoA and glycine to form aminolevulinic acid (ALA), with CoA and CO2 as by-products. Contributes significantly to heme formation during erythropoiesis. This is 5-aminolevulinate synthase, erythroid-specific, mitochondrial (alas2) from Danio rerio (Zebrafish).